The primary structure comprises 291 residues: Taste receptor type 2 member 16 (291 aa).

Position 1 (methionine 1) is a topological domain, extracellular. Residues 2–22 form a helical membrane-spanning segment; it reads IPIQLTVFFMIIYVLESLTII. Topologically, residues 23–41 are cytoplasmic; sequence VQSSLIVAVLGREWLQVRR. A helical membrane pass occupies residues 42 to 62; sequence LMPVDMILISLGISRFCLQWA. At 63–84 the chain is on the extracellular side; the sequence is SMLNNFCSYLNLNYVLCNLTIT. Asparagine 80 is a glycosylation site (N-linked (GlcNAc...) asparagine). The helical transmembrane segment at 85 to 105 threads the bilayer; that stretch reads WEFFNILTFWLNSLLTVFYCI. Topologically, residues 106-125 are cytoplasmic; that stretch reads KVSSFTHHIFLWVRWRILRW. The chain crosses the membrane as a helical span at residues 126–146; sequence FPWILLGSLTIACVTIIPSAI. Residues 147–182 are Extracellular-facing; it reads GNYIQIQLLTMEHLPRNSTVTDRLEKFHQYQFQSHT. Asparagine 163 carries an N-linked (GlcNAc...) asparagine glycan. Residues 183–203 traverse the membrane as a helical segment; that stretch reads VALVIPFILFLASTILLMASL. The Cytoplasmic portion of the chain corresponds to 204–228; the sequence is TKQIQHHSTGHCNPSMKAHFTALRS. A helical membrane pass occupies residues 229-249; it reads LAILFIVFTSYFLIILITIIG. The Extracellular segment spans residues 250–257; that stretch reads TLFDKRCW. Residues 258 to 278 form a helical membrane-spanning segment; it reads LWVWEAFVYAFILMHSTSLML. The Cytoplasmic portion of the chain corresponds to 279-291; it reads SSPTLKRILKGKC.

The protein belongs to the G-protein coupled receptor T2R family. In terms of assembly, interacts with RTP3 and RTP4.

Its subcellular location is the cell membrane. Receptor that may play a role in the perception of bitterness and is gustducin-linked. May function as a bitter taste receptor for the phytonutrient beta glucopyranosides, some of which are toxic and some of which lower the risk of cancer and cardiovascular disease. The activity of this receptor may stimulate alpha gustducin, mediate PLC-beta-2 activation and lead to the gating of TRPM5. The protein is Taste receptor type 2 member 16 (TAS2R16) of Pongo pygmaeus (Bornean orangutan).